Here is a 418-residue protein sequence, read N- to C-terminus: Tyrosine--tRNA ligase (418 aa).

Residue tyrosine 39 coordinates L-tyrosine. The short motif at 44-53 (CTADSLHVGS) is the 'HIGH' region element. L-tyrosine contacts are provided by tyrosine 176 and glutamine 180. The 'KMSKS' region signature appears at 236–240 (KMGKT). Lysine 239 serves as a coordination point for ATP. Residues 350-416 (LPLAEMMRAT…KKRHALIRVL (67 aa)) form the S4 RNA-binding domain.

This sequence belongs to the class-I aminoacyl-tRNA synthetase family. TyrS type 1 subfamily. As to quaternary structure, homodimer.

The protein localises to the cytoplasm. The catalysed reaction is tRNA(Tyr) + L-tyrosine + ATP = L-tyrosyl-tRNA(Tyr) + AMP + diphosphate + H(+). In terms of biological role, catalyzes the attachment of tyrosine to tRNA(Tyr) in a two-step reaction: tyrosine is first activated by ATP to form Tyr-AMP and then transferred to the acceptor end of tRNA(Tyr). The polypeptide is Tyrosine--tRNA ligase (Rhodospirillum rubrum (strain ATCC 11170 / ATH 1.1.1 / DSM 467 / LMG 4362 / NCIMB 8255 / S1)).